The following is a 207-amino-acid chain: MLVYWLDIVGTAVFAISGVLLAGKLRMDPFGVLVLGVVTAVGGGTIRDMALDHGPVFWVKDPTDLVVAMVTSMLTIVLVRQPRRLPKWMLPVLDAVGLAVFVGIGVNKAFNAEAGPLIAVCMGVITGVGGGIIRDVLAREIPMILRTEIYATACIIGGIVHATAYYTFSVPLETASMMGMVVTLLIRLAAIRWHLKLPTFALDENGR.

The helical transmembrane segment at 1–21 (MLVYWLDIVGTAVFAISGVLL) threads the bilayer. At 22-29 (AGKLRMDP) the chain is on the cytoplasmic side. A helical membrane pass occupies residues 30–50 (FGVLVLGVVTAVGGGTIRDMA). The Periplasmic segment spans residues 51–58 (LDHGPVFW). The helical transmembrane segment at 59–79 (VKDPTDLVVAMVTSMLTIVLV) threads the bilayer. The Cytoplasmic segment spans residues 80-85 (RQPRRL). The helical transmembrane segment at 86–106 (PKWMLPVLDAVGLAVFVGIGV) threads the bilayer. The Periplasmic segment spans residues 107–112 (NKAFNA). The chain crosses the membrane as a helical span at residues 113-133 (EAGPLIAVCMGVITGVGGGII). At 134-148 (RDVLAREIPMILRTE) the chain is on the cytoplasmic side. A helical transmembrane segment spans residues 149–169 (IYATACIIGGIVHATAYYTFS). V170 is a topological domain (periplasmic). The helical transmembrane segment at 171–191 (PLETASMMGMVVTLLIRLAAI) threads the bilayer. Residues 192–207 (RWHLKLPTFALDENGR) lie on the Cytoplasmic side of the membrane.

Belongs to the UPF0126 family.

Its subcellular location is the cell inner membrane. The chain is UPF0126 inner membrane protein YadS (yadS) from Escherichia coli O6:H1 (strain CFT073 / ATCC 700928 / UPEC).